The chain runs to 96 residues: Co-chaperonin GroES (96 aa).

The protein belongs to the GroES chaperonin family. Heptamer of 7 subunits arranged in a ring. Interacts with the chaperonin GroEL.

Its subcellular location is the cytoplasm. In terms of biological role, together with the chaperonin GroEL, plays an essential role in assisting protein folding. The GroEL-GroES system forms a nano-cage that allows encapsulation of the non-native substrate proteins and provides a physical environment optimized to promote and accelerate protein folding. GroES binds to the apical surface of the GroEL ring, thereby capping the opening of the GroEL channel. The protein is Co-chaperonin GroES of Methylobacillus flagellatus (strain ATCC 51484 / DSM 6875 / VKM B-1610 / KT).